The primary structure comprises 1132 residues: BTB/POZ domain-containing protein 7 (1132 aa).

The segment covering 1–10 (MGANASNYPH) has biased composition (polar residues). Positions 1–24 (MGANASNYPHSCSPRVGGNSQAQQ) are disordered. A lipid anchor (N-myristoyl glycine) is attached at G2. BTB domains lie at 142 to 211 (TDVD…GMED) and 247 to 341 (YDVV…DLSV). Positions 413–479 (YGSKWVHRQA…WGEHQLMKRI (67 aa)) constitute a BACK domain. The residue at position 722 (S722) is a Phosphoserine. 2 disordered regions span residues 897-1019 (LSQS…HLHR) and 1035-1132 (QRSD…KSAL). Residues 918-927 (RHTHTSRKKH) show a composition bias toward basic residues. Basic and acidic residues-rich tracts occupy residues 928–939 (TLEQKTDTRENP), 1000–1019 (KKQE…HLHR), 1083–1093 (PEERSGRRLAD), and 1105–1114 (TDLEREDSIS). The residue at position 1012 (S1012) is a Phosphoserine.

The protein resides in the nucleus. In terms of biological role, acts as a mediator of epithelial dynamics and organ branching by promoting cleft progression. Induced following accumulation of fibronectin in forming clefts, leading to local expression of the cell-scattering SNAIL2 and suppression of E-cadherin levels, thereby altering cell morphology and reducing cell-cell adhesion. This stimulates cell separation at the base of forming clefts by local, dynamic intercellular gap formation and promotes cleft progression. This Homo sapiens (Human) protein is BTB/POZ domain-containing protein 7 (BTBD7).